The sequence spans 300 residues: Secreted mono- and diacylglycerol lipase LIP4 (300 aa).

Positions 1-16 are cleaved as a signal peptide; the sequence is MRFLAFLLCLVPLALC. Cysteine 54 and cysteine 293 form a disulfide bridge. Serine 167 (nucleophile) is an active-site residue. Aspartate 224 is a catalytic residue.

It belongs to the AB hydrolase superfamily. Lipase family. Class 3 subfamily.

It is found in the secreted. The catalysed reaction is a monoacylglycerol + H2O = glycerol + a fatty acid + H(+). The enzyme catalyses a diacylglycerol + H2O = a monoacylglycerol + a fatty acid + H(+). In terms of biological role, secreted lipase involved in Dandruff and seborrheic dermatitis (D/SD) probably via lipase-mediated breakdown of sebaceous lipids and release of irritating free fatty acids. Shows activity against monoglyceride and diglyceride substrates. Due to an absence of fatty acid synthase genes in Malassezia species, secretory lipases are essential for the yeast to generate free fatty acids from degradation of sebum and assimilate them as lipid sources for growth. Plays an essential role at the pathogen-host interface during disease progression. In Malassezia restricta (Seborrheic dermatitis infection agent), this protein is Secreted mono- and diacylglycerol lipase LIP4.